We begin with the raw amino-acid sequence, 161 residues long: ATP synthase subunit b 2 (161 aa).

Residues 13–33 (IVWLVIALVAMYFVMSRLAIP) form a helical membrane-spanning segment.

It belongs to the ATPase B chain family. In terms of assembly, F-type ATPases have 2 components, F(1) - the catalytic core - and F(0) - the membrane proton channel. F(1) has five subunits: alpha(3), beta(3), gamma(1), delta(1), epsilon(1). F(0) has three main subunits: a(1), b(2) and c(10-14). The alpha and beta chains form an alternating ring which encloses part of the gamma chain. F(1) is attached to F(0) by a central stalk formed by the gamma and epsilon chains, while a peripheral stalk is formed by the delta and b chains.

Its subcellular location is the cell inner membrane. In terms of biological role, f(1)F(0) ATP synthase produces ATP from ADP in the presence of a proton or sodium gradient. F-type ATPases consist of two structural domains, F(1) containing the extramembraneous catalytic core and F(0) containing the membrane proton channel, linked together by a central stalk and a peripheral stalk. During catalysis, ATP synthesis in the catalytic domain of F(1) is coupled via a rotary mechanism of the central stalk subunits to proton translocation. Its function is as follows. Component of the F(0) channel, it forms part of the peripheral stalk, linking F(1) to F(0). The b'-subunit is a diverged and duplicated form of b found in plants and photosynthetic bacteria. This Rhodospirillum rubrum (strain ATCC 11170 / ATH 1.1.1 / DSM 467 / LMG 4362 / NCIMB 8255 / S1) protein is ATP synthase subunit b 2 (atpF2).